The following is a 93-amino-acid chain: Small ribosomal subunit protein uS19 (93 aa).

It belongs to the universal ribosomal protein uS19 family.

Its function is as follows. Protein S19 forms a complex with S13 that binds strongly to the 16S ribosomal RNA. This Caldanaerobacter subterraneus subsp. tengcongensis (strain DSM 15242 / JCM 11007 / NBRC 100824 / MB4) (Thermoanaerobacter tengcongensis) protein is Small ribosomal subunit protein uS19.